Consider the following 194-residue polypeptide: Large ribosomal subunit protein eL15 (194 aa).

The interval 164-194 is disordered; that stretch reads SAGKKGRGLRNKGKGAEKVRPSVRANKGKTK. Residues 167-176 are compositionally biased toward basic residues; sequence KKGRGLRNKG.

Belongs to the eukaryotic ribosomal protein eL15 family.

The chain is Large ribosomal subunit protein eL15 from Thermococcus gammatolerans (strain DSM 15229 / JCM 11827 / EJ3).